The primary structure comprises 456 residues: PTS system sucrose-specific EIIBC component (456 aa).

Positions 4–87 (EQISCSLLPL…TQAAGISESS (84 aa)) constitute a PTS EIIB type-1 domain. Residue Cys26 is the Phosphocysteine intermediate; for EIIB activity of the active site. The region spanning 107–456 (RLLSNIFVPI…LVLKYKTDAE (350 aa)) is the PTS EIIC type-1 domain. A run of 10 helical transmembrane segments spans residues 112–132 (IFVP…LLGM), 144–164 (AIYI…PILI), 181–201 (TLGG…AAGF), 213–233 (MIGY…MSIV), 247–267 (LILT…LIIG), 288–308 (AGWL…ITGI), 329–349 (FLLP…LAVW), 360–380 (ITLP…IFGI), 388–408 (FIAA…VHVY), and 428–448 (LLNY…VSLV).

The protein localises to the cell inner membrane. It catalyses the reaction N(pros)-phospho-L-histidyl-[protein](out) + sucrose = sucrose 6(G)-phosphate(in) + L-histidyl-[protein]. Functionally, the phosphoenolpyruvate-dependent sugar phosphotransferase system (sugar PTS), a major carbohydrate active transport system, catalyzes the phosphorylation of incoming sugar substrates concomitantly with their translocation across the cell membrane. This system is involved in sucrose transport. The polypeptide is PTS system sucrose-specific EIIBC component (Salmonella typhimurium).